We begin with the raw amino-acid sequence, 896 residues long: Translation initiation factor IF-2 (896 aa).

The tract at residues 1 to 260 (MDIENTNKPD…AQTNKKAHKA (260 aa)) is disordered. Basic and acidic residues predominate over residues 19–34 (KAADSKPESGKTDSKR). The span at 56–66 (EESSGGKASGK) shows a compositional bias: low complexity. Over residues 85 to 136 (SVKEKKPDERLEETKKTAPRFEDKKSDAPSAQNEKRSFDSAKKEEKQTERKK) the composition is skewed to basic and acidic residues. A compositionally biased stretch (low complexity) spans 168–177 (RGQGNRPQRP). Positions 375–544 (PRPPVVTIMG…LLQAEVLELK (170 aa)) constitute a tr-type G domain. A G1 region spans residues 384–391 (GHVDHGKT). 384–391 (GHVDHGKT) serves as a coordination point for GTP. Positions 409–413 (GITQH) are G2. The tract at residues 430–433 (DTPG) is G3. GTP-binding positions include 430 to 434 (DTPGH) and 484 to 487 (NKVD). Residues 484 to 487 (NKVD) form a G4 region. A G5 region spans residues 520-522 (SAL). Residues 877-896 (SDSEKYKAPEIKEEGTETDE) form a disordered region.

This sequence belongs to the TRAFAC class translation factor GTPase superfamily. Classic translation factor GTPase family. IF-2 subfamily.

The protein resides in the cytoplasm. One of the essential components for the initiation of protein synthesis. Protects formylmethionyl-tRNA from spontaneous hydrolysis and promotes its binding to the 30S ribosomal subunits. Also involved in the hydrolysis of GTP during the formation of the 70S ribosomal complex. The sequence is that of Translation initiation factor IF-2 from Treponema denticola (strain ATCC 35405 / DSM 14222 / CIP 103919 / JCM 8153 / KCTC 15104).